A 155-amino-acid polypeptide reads, in one-letter code: Cytochrome c-type biogenesis protein CcmE (155 aa).

Topologically, residues 1–8 (MNPLRKKR) are cytoplasmic. A helical; Signal-anchor for type II membrane protein membrane pass occupies residues 9-29 (LLIIAALLAGVGLAMTLALGA). Residues 30-155 (LKENINLFYT…GGSSTPAKQG (126 aa)) are Periplasmic-facing. H124 and Y128 together coordinate heme. The interval 134–155 (TKALRDSGQAAPGGSSTPAKQG) is disordered.

The protein belongs to the CcmE/CycJ family.

It localises to the cell inner membrane. Functionally, heme chaperone required for the biogenesis of c-type cytochromes. Transiently binds heme delivered by CcmC and transfers the heme to apo-cytochromes in a process facilitated by CcmF and CcmH. This chain is Cytochrome c-type biogenesis protein CcmE, found in Pseudomonas savastanoi pv. phaseolicola (strain 1448A / Race 6) (Pseudomonas syringae pv. phaseolicola (strain 1448A / Race 6)).